Consider the following 1185-residue polypeptide: Syntaxin-binding protein 5-like (1185 aa).

Methionine 1 is modified (N-acetylmethionine). Residues 15–44 (ASSPGSGSSSGSNSGGAGSGSVHPGGTAGL) form a disordered region. Positions 16–26 (SSPGSGSSSGS) are enriched in low complexity. WD repeat units lie at residues 73 to 106 (TALA…CYCQ), 113 to 152 (VLQL…SLKF), 157 to 193 (ITYC…GYVI), 212 to 246 (HLSD…ELRV), 252 to 284 (IHSI…PSRP), 306 to 348 (PILK…KAIT), 356 to 390 (IVEF…VVDL), 412 to 489 (TCTA…YKLK), 517 to 628 (QMIY…DLVI), and 642 to 704 (TSLS…IADN). Threonine 567 is modified (phosphothreonine). Residues 567 to 601 (TPEPETSPPFPDLSSQLPPSRSLSGSTNTVSSEGV) form a disordered region. Phosphoserine occurs at positions 573, 588, and 592. Low complexity predominate over residues 578 to 592 (DLSSQLPPSRSLSGS). Threonine 595 carries the post-translational modification Phosphothreonine. Serine 598 is modified (phosphoserine). Arginine 708 carries the post-translational modification Omega-N-methylarginine. Polar residues predominate over residues 747–768 (TSDHVNGHCTSPTSQSCSSGKR). A disordered region spans residues 747–770 (TSDHVNGHCTSPTSQSCSSGKRLS). Residues serine 762, serine 764, serine 765, serine 770, serine 771, serine 792, serine 799, serine 811, serine 819, serine 821, and serine 822 each carry the phosphoserine modification. WD repeat units follow at residues 831-888 (ITAL…SGTF), 897-968 (TFSC…QTCL), 973-1017 (ITET…LDVN), and 1031-1054 (CFTN…TYSQ). Threonine 1092 is modified (phosphothreonine). The region spanning 1120–1180 (SIEGMKGAAG…HELMLKYKDK (61 aa)) is the v-SNARE coiled-coil homology domain.

This sequence belongs to the WD repeat L(2)GL family. As to quaternary structure, interacts with STX1A and STX4. Post-translationally, phosphorylated, leading to STXBP5L increased turnover and subsequent de-repression of insulin secretion. Phosphorylated on serine residues in response to glucose or phorbol esters. Ubiquitinated by the E3 ligase SYVN1, leading to STXBP5L proteasomal degradation. As to expression, detected in hippocampus and cerebellum. Expressed in pancreatic beta-cells where it modulates insulin secretion.

It is found in the cytoplasm. Its subcellular location is the cell membrane. It localises to the membrane. Plays a role in vesicle trafficking and exocytosis inhibition. In pancreatic beta-cells, inhibits insulin secretion probably by interacting with and regulating STX1A and STX4, key t-SNARE proteins involved in the fusion of insulin granules to the plasma membrane. Also plays a role in neurotransmitter release by inhibiting basal acetylcholine release from axon terminals and by preventing synaptic fatigue upon repetitive stimulation. Promotes as well axonal outgrowth. In Mus musculus (Mouse), this protein is Syntaxin-binding protein 5-like (Stxbp5l).